The primary structure comprises 435 residues: Histidine--tRNA ligase (435 aa).

It belongs to the class-II aminoacyl-tRNA synthetase family.

Its subcellular location is the cytoplasm. The enzyme catalyses tRNA(His) + L-histidine + ATP = L-histidyl-tRNA(His) + AMP + diphosphate + H(+). This is Histidine--tRNA ligase (hisS) from Aeropyrum pernix (strain ATCC 700893 / DSM 11879 / JCM 9820 / NBRC 100138 / K1).